Here is a 102-residue protein sequence, read N- to C-terminus: Large ribosomal subunit protein bL21 (102 aa).

Belongs to the bacterial ribosomal protein bL21 family. Part of the 50S ribosomal subunit. Contacts protein L20.

Its function is as follows. This protein binds to 23S rRNA in the presence of protein L20. This Desulfovibrio desulfuricans (strain ATCC 27774 / DSM 6949 / MB) protein is Large ribosomal subunit protein bL21.